The chain runs to 860 residues: Envelope glycoprotein gp160 (860 aa).

The N-terminal stretch at 1–22 (MEPGRNQLFVVILLTSACLVYC) is a signal peptide. Residues 23 to 678 (SQYVTVFYGI…LTSWVKYIQY (656 aa)) are Extracellular-facing. N-linked (GlcNAc...) asparagine; by host glycosylation occurs at Asn37. Cys44 and Cys57 are disulfide-bonded. N-linked (GlcNAc...) asparagine; by host glycosylation is found at Asn70, Asn79, Asn112, Asn119, Asn144, Asn152, Asn194, Asn206, Asn238, Asn241, Asn272, Asn278, Asn289, Asn300, Asn310, Asn365, Asn371, Asn398, Asn410, Asn460, and Asn465. Intrachain disulfides connect Cys101–Cys214, Cys108–Cys205, Cys113–Cys166, Cys227–Cys257, and Cys237–Cys249. The interval 113 to 165 (CSRVQGNTTTPNPRTSSSTTSRPPTSAASIINETSNCIENNTCAGLGYEEMMQ) is V1. The segment at 118–139 (GNTTTPNPRTSSSTTSRPPTSA) is disordered. Positions 119 to 139 (NTTTPNPRTSSSTTSRPPTSA) are enriched in low complexity. The segment at 166 to 205 (CEFNMKGLEQDKKRRYKDTWYLEDVVCDNTTAGTCYMRHC) is V2. The tract at residues 305-337 (CKRPGNKTVLPITLMSGLVFHSQPINTRPRQAW) is V3. Cys305 and Cys338 are joined by a disulfide. Disulfide bonds link Cys390-Cys444 and Cys397-Cys417. A V4 region spans residues 397–417 (CNMTWFLNWVEDKNQTRRNYC). The interval 460 to 468 (NRTHTNITF) is V5. Residues 511 to 531 (GVFVLGFLGFLATAGSAMGAR) are fusion peptide. The tract at residues 574-590 (LQARVTAIEKYLKHQAQ) is immunosuppression. N-linked (GlcNAc...) asparagine; by host glycosylation is found at Asn610, Asn619, and Asn635. Residues 623–644 (QEWEKQVRYLEANISQSLEEAQ) are a coiled coil. An MPER; binding to GalCer region spans residues 656–677 (KLNSWDILGNWFDLTSWVKYIQ). A helical transmembrane segment spans residues 679–699 (GVHIVVGIIALRIAIYVVQLL). Over 700–860 (SRFRKGYRPV…IRQGAELALL (161 aa)) the chain is Cytoplasmic. The YXXV motif; contains endocytosis signal signature appears at 706–709 (YRPV). Cys772 carries the S-palmitoyl cysteine; by host lipid modification. A Di-leucine internalization motif motif is present at residues 859 to 860 (LL).

The mature envelope protein (Env) consists of a homotrimer of non-covalently associated gp120-gp41 heterodimers. The resulting complex protrudes from the virus surface as a spike. There seems to be as few as 10 spikes on the average virion. Interacts with human CD4, CCR5 and CXCR4, to form a P4HB/PDI-CD4-CXCR4-gp120 complex. Gp120 also interacts with the C-type lectins CD209/DC-SIGN and CLEC4M/DC-SIGNR (collectively referred to as DC-SIGN(R)). Gp120 and gp41 interact with GalCer. As to quaternary structure, the mature envelope protein (Env) consists of a homotrimer of non-covalently associated gp120-gp41 heterodimers. The resulting complex protrudes from the virus surface as a spike. There seems to be as few as 10 spikes on the average virion. Specific enzymatic cleavages in vivo yield mature proteins. Envelope glycoproteins are synthesized as an inactive precursor that is heavily N-glycosylated and processed likely by host cell furin in the Golgi to yield the mature SU and TM proteins. The cleavage site between SU and TM requires the minimal sequence [KR]-X-[KR]-R. Post-translationally, palmitoylation of the transmembrane protein and of Env polyprotein (prior to its proteolytic cleavage) is essential for their association with host cell membrane lipid rafts. Palmitoylation is therefore required for envelope trafficking to classical lipid rafts, but not for viral replication.

It localises to the virion membrane. It is found in the host cell membrane. Its subcellular location is the host endosome membrane. Functionally, the surface protein gp120 (SU) attaches the virus to the host lymphoid cell by binding to the primary receptor CD4. This interaction induces a structural rearrangement creating a high affinity binding site for a chemokine coreceptor like CXCR4 and/or CCR5. This peculiar 2 stage receptor-interaction strategy allows gp120 to maintain the highly conserved coreceptor-binding site in a cryptic conformation, protected from neutralizing antibodies. Since CD4 also displays a binding site for the disulfide-isomerase P4HB/PDI, a P4HB/PDI-CD4-CXCR4-gp120 complex may form. In that complex, P4HB/PDI could reach and reduce gp120 disulfide bonds, causing major conformational changes in gp120. TXN, another PDI family member could also be involved in disulfide rearrangements in Env during fusion. These changes are transmitted to the transmembrane protein gp41 and are thought to activate its fusogenic potential by unmasking its fusion peptide. Its function is as follows. The surface protein gp120 is a ligand for CD209/DC-SIGN and CLEC4M/DC-SIGNR, which are respectively found on dendritic cells (DCs), and on endothelial cells of liver sinusoids and lymph node sinuses. These interactions allow capture of viral particles at mucosal surfaces by these cells and subsequent transmission to permissive cells. DCs are professional antigen presenting cells, critical for host immunity by inducing specific immune responses against a broad variety of pathogens. They act as sentinels in various tissues where they take up antigen, process it, and present it to T-cells following migration to lymphoid organs. HIV subverts the migration properties of dendritic cells to gain access to CD4+ T-cells in lymph nodes. Virus transmission to permissive T-cells occurs either in trans (without DCs infection, through viral capture and transmission), or in cis (following DCs productive infection, through the usual CD4-gp120 interaction), thereby inducing a robust infection. In trans infection, bound virions remain infectious over days and it is proposed that they are not degraded, but protected in non-lysosomal acidic organelles within the DCs close to the cell membrane thus contributing to the viral infectious potential during DCs' migration from the periphery to the lymphoid tissues. On arrival at lymphoid tissues, intact virions recycle back to DCs' cell surface allowing virus transmission to CD4+ T-cells. Virion capture also seems to lead to MHC-II-restricted viral antigen presentation, and probably to the activation of HIV-specific CD4+ cells. The transmembrane protein gp41 (TM) acts as a class I viral fusion protein. Under the current model, the protein has at least 3 conformational states: pre-fusion native state, pre-hairpin intermediate state, and post-fusion hairpin state. During fusion of viral and target intracellular membranes, the coiled coil regions (heptad repeats) assume a trimer-of-hairpins structure, positioning the fusion peptide in close proximity to the C-terminal region of the ectodomain. The formation of this structure appears to drive apposition and subsequent fusion of viral and target cell membranes. Complete fusion occurs in host cell endosomes and is dynamin-dependent, however some lipid transfer might occur at the plasma membrane. The virus undergoes clathrin-dependent internalization long before endosomal fusion, thus minimizing the surface exposure of conserved viral epitopes during fusion and reducing the efficacy of inhibitors targeting these epitopes. Membranes fusion leads to delivery of the nucleocapsid into the cytoplasm. In terms of biological role, the envelope glycoprotein gp160 precursor down-modulates cell surface CD4 antigen by interacting with it in the endoplasmic reticulum and blocking its transport to the cell surface. Functionally, the gp120-gp41 heterodimer seems to contribute to T-cell depletion during HIV-1 infection. The envelope glycoproteins expressed on the surface of infected cells induce apoptosis through an interaction with uninfected cells expressing the receptor (CD4) and the coreceptors CXCR4 or CCR5. This type of bystander killing may be obtained by at least three distinct mechanisms. First, the interaction between the 2 cells can induce cellular fusion followed by nuclear fusion within the syncytium. Syncytia are condemned to die from apoptosis. Second, the 2 interacting cells may not fuse entirely and simply exchange plasma membrane lipids, after a sort of hemifusion process, followed by rapid death. Third, it is possible that virus-infected cells, on the point of undergoing apoptosis, fuse with CD4-expressing cells, in which case apoptosis is rapidly transmitted from one cell to the other and thus occurs in a sort of contagious fashion. Its function is as follows. The gp120-gp41 heterodimer allows rapid transcytosis of the virus through CD4 negative cells such as simple epithelial monolayers of the intestinal, rectal and endocervical epithelial barriers. Both gp120 and gp41 specifically recognize glycosphingolipids galactosyl-ceramide (GalCer) or 3' sulfo-galactosyl-ceramide (GalS) present in the lipid rafts structures of epithelial cells. Binding to these alternative receptors allows the rapid transcytosis of the virus through the epithelial cells. This transcytotic vesicle-mediated transport of virions from the apical side to the basolateral side of the epithelial cells does not involve infection of the cells themselves. This Homo sapiens (Human) protein is Envelope glycoprotein gp160 (env).